The sequence spans 201 residues: IDLSRF-like peptide (201 aa).

The signal sequence occupies residues 1 to 28; the sequence is MVRRFCNGAVALGIALTACAAFPRAIMA. A propeptide spanning residues 43–201 is cleaved from the precursor; sequence SDACHPYEPF…EKLVKTGFLD (159 aa). The LDL-receptor class A domain maps to 45 to 85; sequence ACHPYEPFKCPGDGLCISIQYLCDGAPDCQDGYDEDSRLCT. 3 disulfide bridges follow: cysteine 46–cysteine 60, cysteine 54–cysteine 73, and cysteine 67–cysteine 84.

In terms of tissue distribution, expressed in central brain, antennal and optical lobes, in gnathal, thoracic and abdominal ganglia and in the retrocerebral complex (at protein level).

The protein resides in the secreted. This chain is IDLSRF-like peptide, found in Camponotus floridanus (Florida carpenter ant).